The sequence spans 424 residues: Histidine--tRNA ligase (424 aa).

It belongs to the class-II aminoacyl-tRNA synthetase family. As to quaternary structure, homodimer.

The protein localises to the cytoplasm. The enzyme catalyses tRNA(His) + L-histidine + ATP = L-histidyl-tRNA(His) + AMP + diphosphate + H(+). The chain is Histidine--tRNA ligase from Escherichia coli (strain SE11).